Reading from the N-terminus, the 500-residue chain is ACT domain-containing protein ACR2 (500 aa).

4 ACT domains span residues 39-121, 136-213, 298-373, and 376-459; these read VVKV…EANN, AIEM…ADPA, IVTV…RVCE, and KLEL…TVGS. The disordered stretch occupies residues 450–478; sequence EDTKIDTVGSDEPTASASATPQRQPQPHR. Positions 462–474 are enriched in polar residues; sequence PTASASATPQRQP.

In terms of biological role, may bind amino acids. The sequence is that of ACT domain-containing protein ACR2 from Arabidopsis thaliana (Mouse-ear cress).